The following is a 185-amino-acid chain: Small ribosomal subunit protein uS7 (185 aa).

The protein belongs to the universal ribosomal protein uS7 family. Part of the 30S ribosomal subunit.

One of the primary rRNA binding proteins, it binds directly to 16S rRNA where it nucleates assembly of the head domain of the 30S subunit. Is located at the subunit interface close to the decoding center. This Methanosarcina barkeri (strain Fusaro / DSM 804) protein is Small ribosomal subunit protein uS7.